A 120-amino-acid polypeptide reads, in one-letter code: Large ribosomal subunit protein uL18 (120 aa).

Belongs to the universal ribosomal protein uL18 family. Part of the 50S ribosomal subunit; part of the 5S rRNA/L5/L18/L25 subcomplex. Contacts the 5S and 23S rRNAs.

Functionally, this is one of the proteins that bind and probably mediate the attachment of the 5S RNA into the large ribosomal subunit, where it forms part of the central protuberance. This Methylorubrum extorquens (strain CM4 / NCIMB 13688) (Methylobacterium extorquens) protein is Large ribosomal subunit protein uL18.